We begin with the raw amino-acid sequence, 155 residues long: Ribosomal RNA large subunit methyltransferase H (155 aa).

S-adenosyl-L-methionine contacts are provided by residues L73, G104, and 123–128 (LSPLTL).

The protein belongs to the RNA methyltransferase RlmH family. As to quaternary structure, homodimer.

The protein resides in the cytoplasm. It catalyses the reaction pseudouridine(1915) in 23S rRNA + S-adenosyl-L-methionine = N(3)-methylpseudouridine(1915) in 23S rRNA + S-adenosyl-L-homocysteine + H(+). In terms of biological role, specifically methylates the pseudouridine at position 1915 (m3Psi1915) in 23S rRNA. The chain is Ribosomal RNA large subunit methyltransferase H from Pseudomonas putida (strain W619).